Here is a 613-residue protein sequence, read N- to C-terminus: Ectonucleoside triphosphate diphosphohydrolase 4 (613 aa).

Residues Met-1–Gln-33 lie on the Cytoplasmic side of the membrane. Residues Ile-34–Ile-54 form a helical membrane-spanning segment. The Lumenal segment spans residues Arg-55–Ser-559. Glu-222 (proton acceptor) is an active-site residue. Cys-368 and Cys-395 are oxidised to a cystine. N-linked (GlcNAc...) asparagine glycosylation is found at Asn-404 and Asn-407. A disulfide bridge connects residues Cys-461 and Cys-490. Residues Phe-560 to Leu-580 form a helical membrane-spanning segment. At Tyr-581–Leu-613 the chain is on the cytoplasmic side.

The protein belongs to the GDA1/CD39 NTPase family. Requires Ca(2+) as cofactor. Mg(2+) is required as a cofactor. As to expression, ubiquitous.

The protein resides in the cytoplasmic vesicle. It is found in the autophagosome membrane. It localises to the lysosome membrane. The protein localises to the golgi apparatus membrane. It carries out the reaction a ribonucleoside 5'-triphosphate + H2O = a ribonucleoside 5'-diphosphate + phosphate + H(+). The enzyme catalyses a ribonucleoside 5'-diphosphate + H2O = a ribonucleoside 5'-phosphate + phosphate + H(+). The catalysed reaction is UDP + H2O = UMP + phosphate + H(+). It catalyses the reaction UTP + H2O = UDP + phosphate + H(+). It carries out the reaction CTP + H2O = CDP + phosphate + H(+). The enzyme catalyses GDP + H2O = GMP + phosphate + H(+). The catalysed reaction is 5-methyl-UTP + H2O = 5-methyl-UDP + phosphate + H(+). Catalyzes the hydrolysis of nucleoside triphosphates and diphosphates in a calcium- or magnesium-dependent manner, with a preference for pyrimidines. Preferentially hydrolyzes UTP and TTP on UTP and TTP. AMP, ADP, ATP and UMP are not substrates. Preferentially activated by Ca(2+) over Mg(2+). Its function is as follows. Has a broad substrate specificity with the ability of cleaving all nucleotide di- and triphosphates with the exception of adenosine di- and triphosphate (ADP and ATP). Preferentially hydrolyzes CTP, UDP, CDP, GTP and GDP. Can use either Ca(2+) or Mg(2+) equally. In Mus musculus (Mouse), this protein is Ectonucleoside triphosphate diphosphohydrolase 4 (Entpd4).